The following is a 343-amino-acid chain: Methionine import ATP-binding protein MetN 1 (343 aa).

One can recognise an ABC transporter domain in the interval 2-241 (IKLSNITKVF…PKTPLAQKFI (240 aa)). Residue 38–45 (GASGAGKS) coordinates ATP.

This sequence belongs to the ABC transporter superfamily. Methionine importer (TC 3.A.1.24) family. In terms of assembly, the complex is composed of two ATP-binding proteins (MetN), two transmembrane proteins (MetI) and a solute-binding protein (MetQ).

The protein localises to the cell inner membrane. The enzyme catalyses L-methionine(out) + ATP + H2O = L-methionine(in) + ADP + phosphate + H(+). The catalysed reaction is D-methionine(out) + ATP + H2O = D-methionine(in) + ADP + phosphate + H(+). Its function is as follows. Part of the ABC transporter complex MetNIQ involved in methionine import. Responsible for energy coupling to the transport system. In Salmonella paratyphi A (strain ATCC 9150 / SARB42), this protein is Methionine import ATP-binding protein MetN 1.